Here is an 84-residue protein sequence, read N- to C-terminus: Transmembrane protein EP84R (84 aa).

2 helical membrane passes run V31–L51 and A60–Y80.

Belongs to the asfivirus EP84R family.

It is found in the virion membrane. The sequence is that of Transmembrane protein EP84R from Ornithodoros (relapsing fever ticks).